The primary structure comprises 602 residues: Sulfite reductase [NADPH] hemoprotein beta-component (602 aa).

The segment at 1-23 is disordered; that stretch reads MDDTKTASPAPARAYETPPAERP. Residues Cys-458, Cys-464, Cys-503, and Cys-507 each contribute to the [4Fe-4S] cluster site. Cys-507 is a siroheme binding site.

This sequence belongs to the nitrite and sulfite reductase 4Fe-4S domain family. In terms of assembly, alpha(8)-beta(8). The alpha component is a flavoprotein, the beta component is a hemoprotein. Siroheme is required as a cofactor. Requires [4Fe-4S] cluster as cofactor.

The enzyme catalyses hydrogen sulfide + 3 NADP(+) + 3 H2O = sulfite + 3 NADPH + 4 H(+). It participates in sulfur metabolism; hydrogen sulfide biosynthesis; hydrogen sulfide from sulfite (NADPH route): step 1/1. Component of the sulfite reductase complex that catalyzes the 6-electron reduction of sulfite to sulfide. This is one of several activities required for the biosynthesis of L-cysteine from sulfate. The polypeptide is Sulfite reductase [NADPH] hemoprotein beta-component (Methylobacterium sp. (strain 4-46)).